We begin with the raw amino-acid sequence, 447 residues long: MAGQKILSLLVIALVVTFAAAARLLDEENAFSATTTTLGSGSGSTGIGFGAGTGSSGSGSTGFGFGAGSGSSGSGSTGSGLGAGTGSIPSSGSGPGLLPTASSVPGSLAGGGSGSLPTTGSATGAGAGTGSALGGGPGAGSALGGGAGAGPALGGGAGAGPALGGGAGAGSALGGGGAGAGPALGGGGAGAGPALGGGVAGSGSALGGGASAGPDNTLVFFMHDILGGSNPTARAVTGVVANPALSGQLPFAKPNGANLPVSNGVPSNNNNNGIVNNNNVPFLVGLGGTTANILQNNNNGNNILNGFPVASGGQLPSGSALQMLMFGTMTVIDDELTEGHELGSGLLGKAQGYYVASAIDGTSQTMAFTAMFESGGYEDSISFFGVLRTAVSESHIGVMGGTGKYVNARGFAILKTFTGSSGTQQNQPHQFTDGLETVVECTVYLSY.

The first 21 residues, 1–21 (MAGQKILSLLVIALVVTFAAA), serve as a signal peptide directing secretion. Positions 74 to 85 (SGSTGSGLGAGT) are enriched in gly residues. The tract at residues 74 to 123 (SGSTGSGLGAGTGSIPSSGSGPGLLPTASSVPGSLAGGGSGSLPTTGSAT) is disordered. Positions 86–107 (GSIPSSGSGPGLLPTASSVPGS) are enriched in low complexity.

It belongs to the plant dirigent protein family. In terms of assembly, homodimer. As to expression, in roots, mostly detected in root endodermis and quiescent center, and, to a lower extent, in root stele and cortex. Expressed in root vascular cylinder, flowers, siliques, cotyledon and leaf veins, and leaf margins. Present in the basal region of rosette leaf trichomes and in developing xylem.

It is found in the secreted. Its subcellular location is the extracellular space. The protein resides in the apoplast. In terms of biological role, dirigent proteins impart stereoselectivity on the phenoxy radical-coupling reaction, yielding optically active lignans from two molecules of coniferyl alcohol in the biosynthesis of lignans, flavonolignans, and alkaloids and thus plays a central role in plant secondary metabolism. Regulates suberin accumulation in roots. The protein is Dirigent protein 10 (DIR10) of Arabidopsis thaliana (Mouse-ear cress).